A 488-amino-acid chain; its full sequence is Serine hydroxymethyltransferase, mitochondrial (488 aa).

The N-terminal 20 residues, 1–20 (MAVLRQFVKNSYSSIPKRFY), are a transit peptide targeting the mitochondrion. Position 265 is an N6-(pyridoxal phosphate)lysine (lysine 265).

This sequence belongs to the SHMT family. In terms of assembly, homotetramer. Pyridoxal 5'-phosphate is required as a cofactor.

It is found in the mitochondrion. The catalysed reaction is (6R)-5,10-methylene-5,6,7,8-tetrahydrofolate + glycine + H2O = (6S)-5,6,7,8-tetrahydrofolate + L-serine. Its pathway is one-carbon metabolism; tetrahydrofolate interconversion. Functionally, interconversion of serine and glycine. The protein is Serine hydroxymethyltransferase, mitochondrial (shm2) of Schizosaccharomyces pombe (strain 972 / ATCC 24843) (Fission yeast).